Consider the following 108-residue polypeptide: Glutaredoxin-C10 (108 aa).

Residues 1–107 enclose the Glutaredoxin domain; the sequence is MERVAKLASE…PMLKNAGALW (107 aa). C21 and C24 are oxidised to a cystine. The Responsive for interaction with TGA factors signature appears at 105–108; sequence ALWL.

The protein belongs to the glutaredoxin family. CC-type subfamily.

The protein localises to the cytoplasm. It is found in the nucleus. In terms of biological role, has a glutathione-disulfide oxidoreductase activity in the presence of NADPH and glutathione reductase. Reduces low molecular weight disulfides and proteins. The sequence is that of Glutaredoxin-C10 (GRXC10) from Oryza sativa subsp. japonica (Rice).